Consider the following 250-residue polypeptide: Probable transcriptional regulatory protein SACE_2018 (250 aa).

The protein belongs to the TACO1 family.

Its subcellular location is the cytoplasm. This chain is Probable transcriptional regulatory protein SACE_2018, found in Saccharopolyspora erythraea (strain ATCC 11635 / DSM 40517 / JCM 4748 / NBRC 13426 / NCIMB 8594 / NRRL 2338).